The primary structure comprises 26 residues: Dermaseptin-J2 (26 aa).

Valine amide is present on Val26.

Expressed by the skin glands.

The protein localises to the secreted. In terms of biological role, has antimicrobial activity. This chain is Dermaseptin-J2, found in Phasmahyla jandaia (Jandaia leaf frog).